Reading from the N-terminus, the 335-residue chain is Acetyl-coenzyme A carboxylase carboxyl transferase subunit alpha (335 aa).

Positions 48-308 (TLEKKVEALR…KGILIEELSA (261 aa)) constitute a CoA carboxyltransferase C-terminal domain.

The protein belongs to the AccA family. Acetyl-CoA carboxylase is a heterohexamer composed of biotin carboxyl carrier protein (AccB), biotin carboxylase (AccC) and two subunits each of ACCase subunit alpha (AccA) and ACCase subunit beta (AccD).

The protein resides in the cytoplasm. The enzyme catalyses N(6)-carboxybiotinyl-L-lysyl-[protein] + acetyl-CoA = N(6)-biotinyl-L-lysyl-[protein] + malonyl-CoA. Its pathway is lipid metabolism; malonyl-CoA biosynthesis; malonyl-CoA from acetyl-CoA: step 1/1. Its function is as follows. Component of the acetyl coenzyme A carboxylase (ACC) complex. First, biotin carboxylase catalyzes the carboxylation of biotin on its carrier protein (BCCP) and then the CO(2) group is transferred by the carboxyltransferase to acetyl-CoA to form malonyl-CoA. The chain is Acetyl-coenzyme A carboxylase carboxyl transferase subunit alpha from Chlorobium phaeovibrioides (strain DSM 265 / 1930) (Prosthecochloris vibrioformis (strain DSM 265)).